The chain runs to 310 residues: UPF0761 membrane protein VSAL_I2938 (310 aa).

Helical transmembrane passes span 34-54 (YMAYITLLSLVPLVTVLLSVL), 97-117 (MTAVGSGFLFVASVMLISAID), 136-156 (FSLYWMILTLGPLLVWASLAA), 178-198 (LLGWLPIILSFSAFLGLYLLV), 207-227 (HALVGAMSAGCLFEVSKVGFA), and 242-262 (ALAAVPILFVWIYLCWIIVLI).

The protein belongs to the UPF0761 family.

It localises to the cell inner membrane. This chain is UPF0761 membrane protein VSAL_I2938, found in Aliivibrio salmonicida (strain LFI1238) (Vibrio salmonicida (strain LFI1238)).